We begin with the raw amino-acid sequence, 652 residues long: DNA ligase (652 aa).

NAD(+) contacts are provided by residues 29-33, 78-79, and Glu-107; these read DSEYD and SL. Lys-109 (N6-AMP-lysine intermediate) is an active-site residue. Positions 130, 164, 278, and 302 each coordinate NAD(+). Zn(2+) contacts are provided by Cys-395, Cys-398, Cys-413, and Cys-418. Residues 577–652 enclose the BRCT domain; that stretch reads VADAALSGLT…VRDEAWLESL (76 aa).

The protein belongs to the NAD-dependent DNA ligase family. LigA subfamily. The cofactor is Mg(2+). Requires Mn(2+) as cofactor.

It carries out the reaction NAD(+) + (deoxyribonucleotide)n-3'-hydroxyl + 5'-phospho-(deoxyribonucleotide)m = (deoxyribonucleotide)n+m + AMP + beta-nicotinamide D-nucleotide.. DNA ligase that catalyzes the formation of phosphodiester linkages between 5'-phosphoryl and 3'-hydroxyl groups in double-stranded DNA using NAD as a coenzyme and as the energy source for the reaction. It is essential for DNA replication and repair of damaged DNA. In Streptococcus pneumoniae (strain P1031), this protein is DNA ligase.